Consider the following 108-residue polypeptide: Thiosulfate sulfurtransferase GlpE (108 aa).

In terms of domain architecture, Rhodanese spans E18–T106. C66 (cysteine persulfide intermediate) is an active-site residue.

It belongs to the GlpE family.

It localises to the cytoplasm. The catalysed reaction is thiosulfate + hydrogen cyanide = thiocyanate + sulfite + 2 H(+). It carries out the reaction thiosulfate + [thioredoxin]-dithiol = [thioredoxin]-disulfide + hydrogen sulfide + sulfite + 2 H(+). In terms of biological role, transferase that catalyzes the transfer of sulfur from thiosulfate to thiophilic acceptors such as cyanide or dithiols. May function in a CysM-independent thiosulfate assimilation pathway by catalyzing the conversion of thiosulfate to sulfite, which can then be used for L-cysteine biosynthesis. The polypeptide is Thiosulfate sulfurtransferase GlpE (Actinobacillus pleuropneumoniae serotype 3 (strain JL03)).